The sequence spans 245 residues: Tetrahydromethanopterin S-methyltransferase subunit A 1 (245 aa).

Over 1–222 the chain is Cytoplasmic; that stretch reads MADKKPAADN…AGNYSGKVQG (222 aa). Position 84 (His84) interacts with 5-hydroxybenzimidazolylcob(I)amide. The helical transmembrane segment at 223-243 threads the bilayer; sequence IMIGLIFTLVIGFLLLMAPLL. Topologically, residues 244–245 are extracellular; that stretch reads GA.

This sequence belongs to the MtrA family. As to quaternary structure, the complex is composed of 8 subunits; MtrA, MtrB, MtrC, MtrD, MtrE, MtrF, MtrG and MtrH. It depends on 5-hydroxybenzimidazolylcob(I)amide as a cofactor.

It localises to the cell membrane. It carries out the reaction 5-methyl-5,6,7,8-tetrahydromethanopterin + coenzyme M + 2 Na(+)(in) = 5,6,7,8-tetrahydromethanopterin + methyl-coenzyme M + 2 Na(+)(out). It functions in the pathway one-carbon metabolism; methanogenesis from CO(2); methyl-coenzyme M from 5,10-methylene-5,6,7,8-tetrahydromethanopterin: step 2/2. In terms of biological role, part of a complex that catalyzes the formation of methyl-coenzyme M and tetrahydromethanopterin from coenzyme M and methyl-tetrahydromethanopterin. This is an energy-conserving, sodium-ion translocating step. This Methanobrevibacter ruminantium (strain ATCC 35063 / DSM 1093 / JCM 13430 / OCM 146 / M1) (Methanobacterium ruminantium) protein is Tetrahydromethanopterin S-methyltransferase subunit A 1.